A 625-amino-acid polypeptide reads, in one-letter code: Probable potassium transport system protein Kup 2 (625 aa).

The next 12 helical transmembrane spans lie at 10–30 (LAAL…TSPL), 47–67 (GVHL…VVTL), 104–124 (VLLL…VITP), 140–160 (PAFK…LFAV), 172–192 (FGPV…AEII), 214–234 (GWHM…VEAL), 250–270 (WLGL…ALLM), 283–303 (LFPQ…TVIA), 347–367 (WLLL…SALA), 369–389 (AYGI…FFVV), 396–416 (PLPV…LLVV), and 422–442 (FFQG…VMAT).

It belongs to the HAK/KUP transporter (TC 2.A.72) family.

The protein resides in the cell inner membrane. The catalysed reaction is K(+)(in) + H(+)(in) = K(+)(out) + H(+)(out). In terms of biological role, transport of potassium into the cell. Likely operates as a K(+):H(+) symporter. This is Probable potassium transport system protein Kup 2 from Albidiferax ferrireducens (strain ATCC BAA-621 / DSM 15236 / T118) (Rhodoferax ferrireducens).